A 288-amino-acid polypeptide reads, in one-letter code: Phenazine biosynthesis-like domain-containing protein 1 (288 aa).

The active site involves E46.

The protein belongs to the PhzF family.

The protein is Phenazine biosynthesis-like domain-containing protein 1 (Pbld1) of Mus musculus (Mouse).